The sequence spans 168 residues: Inorganic pyrophosphatase (168 aa).

Positions 23, 37, and 49 each coordinate substrate. Mg(2+)-binding residues include aspartate 59, aspartate 64, and aspartate 96. Residue tyrosine 133 participates in substrate binding.

Belongs to the PPase family. In terms of assembly, homohexamer. It depends on Mg(2+) as a cofactor.

It localises to the cytoplasm. The enzyme catalyses diphosphate + H2O = 2 phosphate + H(+). Its function is as follows. Catalyzes the hydrolysis of inorganic pyrophosphate (PPi) forming two phosphate ions. This is Inorganic pyrophosphatase from Methanosarcina acetivorans (strain ATCC 35395 / DSM 2834 / JCM 12185 / C2A).